Reading from the N-terminus, the 224-residue chain is 4'-phosphopantetheinyl transferase (224 aa).

Mg(2+)-binding residues include aspartate 107, glutamate 109, and glutamate 151. Residues 158-189 are peptidyl carrier protein binding; that stretch reads GKGLSLPLDSFSVRLKDDGHVSIELPDGHEPC.

The protein belongs to the P-Pant transferase superfamily. Gsp/Sfp/HetI/AcpT family. Requires Mg(2+) as cofactor.

It carries out the reaction apo-[peptidyl-carrier protein] + CoA = holo-[peptidyl-carrier protein] + adenosine 3',5'-bisphosphate + H(+). In terms of biological role, may activate the peptidyl carrier protein (PCP) domains of surfactin synthetase SRF1/2/3 and iturin A synthetase, by transferring the 4'-phosphopantetheinyl moiety of coenzyme A (CoA) to a serine residue. Required for the coproduction of the lipopeptide antibiotics, iturin A and surfactin. The protein is 4'-phosphopantetheinyl transferase (lpa-14) of Bacillus subtilis.